Consider the following 497-residue polypeptide: MKYHDLRDFLALLEKQGELKRITLPVDPYLEMTEIADRTLRAGGPALLFENPKGYSMPVLCNLFGTPKRVAMGMGQEDVSALREVGKLLAFLKEPEPPKGFRDLFDKLPQFKQVLNMPTKRLRGAPCQQKILEGDAVDLTRIPIMQCWPEDAAPLITWGLTVTRGPHKERQNLGIYRQQLIGKNKLIMRWLSHRGGALDFQEWCAAHPGERFPVSVALGADPATILGAVTPVPDTLSEYAFAGLLRGTKTEVVKCISNDLEVPASAEIVLEGYIEQGDMAPEGPYGDHTGYYNEIDNFPVFTVTHITQRDDAIYHSTYTGRPPDEPAVLGVALNEVFVPILQKQFPEIVDFYLPPEGCSYRLAVVTIKKQYAGHAKRVMMGVWSFLRQFMYTKFVIVCDDDVNARDWNDVIWAITTRMDPARDTVLVENTPIDYLDFASPVSGLGSKMGLDATNKWPGETSREWGRPIQKDPEVTARIDAIWDELAILNDGKPESDR.

Residue Asn-172 coordinates Mn(2+). Residues 175–177, 189–191, and 194–195 each bind prenylated FMN; these read IYR, RWL, and RG. Glu-238 is a Mn(2+) binding site. The active-site Proton donor is Asp-287.

The protein belongs to the UbiD family. Homohexamer. Prenylated FMN serves as cofactor. Mn(2+) is required as a cofactor.

The protein localises to the cell membrane. The catalysed reaction is a 4-hydroxy-3-(all-trans-polyprenyl)benzoate + H(+) = a 2-(all-trans-polyprenyl)phenol + CO2. The protein operates within cofactor biosynthesis; ubiquinone biosynthesis. Functionally, catalyzes the decarboxylation of 3-octaprenyl-4-hydroxy benzoate to 2-octaprenylphenol, an intermediate step in ubiquinone biosynthesis. In Enterobacter sp. (strain 638), this protein is 3-octaprenyl-4-hydroxybenzoate carboxy-lyase.